The primary structure comprises 72 residues: ATP synthase subunit c (72 aa).

2 helical membrane passes run 5–25 and 52–72; these read LLAA…IGIA and GLSE…LFVV.

This sequence belongs to the ATPase C chain family. In terms of assembly, F-type ATPases have 2 components, F(1) - the catalytic core - and F(0) - the membrane proton channel. F(1) has five subunits: alpha(3), beta(3), gamma(1), delta(1), epsilon(1). F(0) has three main subunits: a(1), b(2) and c(10-14). The alpha and beta chains form an alternating ring which encloses part of the gamma chain. F(1) is attached to F(0) by a central stalk formed by the gamma and epsilon chains, while a peripheral stalk is formed by the delta and b chains.

It localises to the cell membrane. Functionally, f(1)F(0) ATP synthase produces ATP from ADP in the presence of a proton or sodium gradient. F-type ATPases consist of two structural domains, F(1) containing the extramembraneous catalytic core and F(0) containing the membrane proton channel, linked together by a central stalk and a peripheral stalk. During catalysis, ATP synthesis in the catalytic domain of F(1) is coupled via a rotary mechanism of the central stalk subunits to proton translocation. Key component of the F(0) channel; it plays a direct role in translocation across the membrane. A homomeric c-ring of between 10-14 subunits forms the central stalk rotor element with the F(1) delta and epsilon subunits. The chain is ATP synthase subunit c from Clostridium perfringens (strain SM101 / Type A).